Consider the following 282-residue polypeptide: MLYQAASEAAQKRWTTSDFDIGKPLGRGKFGHVYLAREKRSDHIVALKVLFKAQLQQSQVEHQLRREVEIQSHLRHPNILRLYGYFYDQKRVYLILEYAVRGELYKELQKCKYFSERRAATYVASLARALIYCHGKHVIHRDIKPENLLIGAQGELKIADFGWSVHTFNRRRTMCGTLDYLPPEMVESVEHDASVDIWSLGILCYEFLYGVPPFEAREHSETYKRIVQVDLKFPPKPIVSSSAKDLISQMLVKESTQRLALHKLLEHPWIVQNADPSGLYRG.

Residues 19 to 270 (FDIGKPLGRG…LHKLLEHPWI (252 aa)) form the Protein kinase domain. ATP contacts are provided by residues 25-33 (LGRGKFGHV) and K48. The active-site Proton acceptor is the D142. S164 carries the post-translational modification Phosphoserine. Position 173 is a phosphothreonine (T173).

It belongs to the protein kinase superfamily. Ser/Thr protein kinase family. Aurora subfamily. Post-translationally, phosphorylation at Thr-173 may regulate activity and degradation of AUR2 in a cell cycle dependent manner. In terms of tissue distribution, abundant in roots, flowers and flower buds, low or absent in expanded leaves, stems and siliques.

It localises to the nucleus membrane. The protein resides in the cytoplasm. It is found in the cytoskeleton. The protein localises to the spindle. Its subcellular location is the spindle pole. It catalyses the reaction L-seryl-[protein] + ATP = O-phospho-L-seryl-[protein] + ADP + H(+). It carries out the reaction L-threonyl-[protein] + ATP = O-phospho-L-threonyl-[protein] + ADP + H(+). Phosphorylates specifically 'Ser-10' of histone H3 in vitro. Associates with cytoskeletal structures that are necessary for cytokinesis and with the microtubule spindle. Might colocalize with gamma-tubulin and function in microtubule organizing centers (MTOCs). This chain is Serine/threonine-protein kinase Aurora-2 (AUR2), found in Arabidopsis thaliana (Mouse-ear cress).